We begin with the raw amino-acid sequence, 126 residues long: Large ribosomal subunit protein bL19 (126 aa).

This sequence belongs to the bacterial ribosomal protein bL19 family.

This protein is located at the 30S-50S ribosomal subunit interface and may play a role in the structure and function of the aminoacyl-tRNA binding site. The polypeptide is Large ribosomal subunit protein bL19 (Gluconacetobacter diazotrophicus (strain ATCC 49037 / DSM 5601 / CCUG 37298 / CIP 103539 / LMG 7603 / PAl5)).